Reading from the N-terminus, the 62-residue chain is Short neurotoxin B (62 aa).

Positions 1 to 16 (RRCFNHPSSQPQTNKS) are enriched in polar residues. Residues 1–21 (RRCFNHPSSQPQTNKSCPPGE) form a disordered region. 4 disulfides stabilise this stretch: Cys-3/Cys-24, Cys-17/Cys-41, Cys-43/Cys-54, and Cys-55/Cys-60.

Belongs to the three-finger toxin family. Short-chain subfamily. Type I alpha-neurotoxin sub-subfamily. Expressed by the venom gland.

Its subcellular location is the secreted. In terms of biological role, binds to muscle nicotinic acetylcholine receptor (nAChR) and inhibit acetylcholine from binding to the receptor, thereby impairing neuromuscular transmission. This chain is Short neurotoxin B, found in Laticauda crockeri (Crocker's sea snake).